The chain runs to 372 residues: Phospho-N-acetylmuramoyl-pentapeptide-transferase (372 aa).

The next 10 helical transmembrane spans lie at 25–45, 73–93, 98–118, 134–154, 176–196, 211–231, 251–271, 275–295, 300–320, and 349–369; these read RSLL…PIMI, TMGG…WADL, VWIV…DDWI, FFWT…IATQ, SIPL…YLVI, GLAI…AYLS, LVVI…YNAH, VFMG…IAVM, IVFA…FLQI, and QVVI…LMTL.

The protein belongs to the glycosyltransferase 4 family. MraY subfamily. The cofactor is Mg(2+).

The protein resides in the cell inner membrane. The catalysed reaction is UDP-N-acetyl-alpha-D-muramoyl-L-alanyl-gamma-D-glutamyl-meso-2,6-diaminopimeloyl-D-alanyl-D-alanine + di-trans,octa-cis-undecaprenyl phosphate = di-trans,octa-cis-undecaprenyl diphospho-N-acetyl-alpha-D-muramoyl-L-alanyl-D-glutamyl-meso-2,6-diaminopimeloyl-D-alanyl-D-alanine + UMP. It participates in cell wall biogenesis; peptidoglycan biosynthesis. Its function is as follows. Catalyzes the initial step of the lipid cycle reactions in the biosynthesis of the cell wall peptidoglycan: transfers peptidoglycan precursor phospho-MurNAc-pentapeptide from UDP-MurNAc-pentapeptide onto the lipid carrier undecaprenyl phosphate, yielding undecaprenyl-pyrophosphoryl-MurNAc-pentapeptide, known as lipid I. The sequence is that of Phospho-N-acetylmuramoyl-pentapeptide-transferase from Acinetobacter baumannii (strain AB0057).